The chain runs to 264 residues: MICOS complex subunit MIC27 (264 aa).

The N-terminal 27 residues, 1–27, are a transit peptide targeting the mitochondrion; the sequence is MAALRMGKLTTMPTGLIYASISVHVAK. The Mitochondrial intermembrane segment spans residues 28 to 110; that stretch reads EEESKKQLVK…YVYLKNPPRD (83 aa). The helical transmembrane segment at 111–129 threads the bilayer; it reads FLPKIGVITVSGLAGFISA. At 130–137 the chain is on the mitochondrial matrix side; it reads RKGSRFKR. The chain crosses the membrane as a helical span at residues 138 to 155; it reads IAYPLGLATLGATVCYPV. The Mitochondrial intermembrane segment spans residues 156-264; it reads QSVIIAKVAG…EDIDMYSTRS (109 aa). Over residues 189–198 the composition is skewed to basic and acidic residues; sequence KLPEHKEKTK. Residues 189-264 form a disordered region; the sequence is KLPEHKEKTK…EDIDMYSTRS (76 aa). Residues 223-238 show a composition bias toward low complexity; sequence AELSSETKTKSTSGAT. A compositionally biased stretch (basic and acidic residues) spans 245–256; the sequence is KLMDHGQSHPED.

It belongs to the apolipoprotein O/MICOS complex subunit Mic27 family. Component of the mitochondrial contact site and cristae organizing system (MICOS) complex, composed of at least MICOS10/MIC10, CHCHD3/MIC19, CHCHD6/MIC25, APOOL/MIC27, IMMT/MIC60, APOO/MIC23/MIC26 and QIL1/MIC13. This complex was also known under the names MINOS or MitOS complex. The MICOS complex associates with mitochondrial outer membrane proteins SAMM50, MTX1 and MTX2 (together described as components of the mitochondrial outer membrane sorting assembly machinery (SAM) complex) and DNAJC11, mitochondrial inner membrane protein TMEM11 and with HSPA9. The MICOS and SAM complexes together with DNAJC11 are part of a large protein complex spanning both membranes termed the mitochondrial intermembrane space bridging (MIB) complex. Interacts with MICOS10/MIC10, IMMT/MIC60 and APOO/MIC23/MIC26.

The protein localises to the mitochondrion inner membrane. Its subcellular location is the mitochondrion. Component of the MICOS complex, a large protein complex of the mitochondrial inner membrane that plays crucial roles in the maintenance of crista junctions, inner membrane architecture, and formation of contact sites to the outer membrane. Specifically binds to cardiolipin (in vitro) but not to the precursor lipid phosphatidylglycerol. Plays a crucial role in crista junction formation and mitochondrial function. The chain is MICOS complex subunit MIC27 (APOL) from Bos taurus (Bovine).